Consider the following 173-residue polypeptide: Transcription factor E (173 aa).

One can recognise an HTH TFE/IIEalpha-type domain in the interval 3-88; the sequence is NNPIIQQVLL…TWRATFTKLP (86 aa).

It belongs to the TFE family. Monomer. Interaction with RNA polymerase subunits RpoF and RpoE is necessary for Tfe stimulatory transcription activity. Able to interact with Tbp and RNA polymerase in the absence of DNA promoter. Interacts both with the preinitiation and elongation complexes.

Its function is as follows. Transcription factor that plays a role in the activation of archaeal genes transcribed by RNA polymerase. Facilitates transcription initiation by enhancing TATA-box recognition by TATA-box-binding protein (Tbp), and transcription factor B (Tfb) and RNA polymerase recruitment. Not absolutely required for transcription in vitro, but particularly important in cases where Tbp or Tfb function is not optimal. It dynamically alters the nucleic acid-binding properties of RNA polymerases by stabilizing the initiation complex and destabilizing elongation complexes. Seems to translocate with the RNA polymerase following initiation and acts by binding to the non template strand of the transcription bubble in elongation complexes. The chain is Transcription factor E from Methanococcus aeolicus (strain ATCC BAA-1280 / DSM 17508 / OCM 812 / Nankai-3).